Reading from the N-terminus, the 718-residue chain is Auxin response factor 2 (718 aa).

Residues 1–24 form a disordered region; it reads MVGIDLNTVEEEEDEEEGGATGTV. Positions 8–18 are enriched in acidic residues; the sequence is TVEEEEDEEEG. Residues 147–249 constitute a DNA-binding region (TF-B3); sequence FCKTLTASDT…ELRLGVRRAA (103 aa).

This sequence belongs to the ARF family. In terms of assembly, homo and heterodimers. Expressed in roots, culms, leaves and young panicles.

It is found in the nucleus. Its function is as follows. Auxin response factors (ARFs) are transcriptional factors that bind specifically to the DNA sequence 5'-TGTCTC-3' found in the auxin-responsive promoter elements (AuxREs). This Oryza sativa subsp. japonica (Rice) protein is Auxin response factor 2 (ARF2).